The following is a 909-amino-acid chain: MAARPLPVSPARALLLALAGALLAPCEARGVSLWNQGRADEVVSASVGSGDLWIPVKSFDSKNHPEVLNIRLQRESKELIINLERNEGLIASSFTETHYLQDGTDVSLARNYTVILGHCYYHGHVRGYSDSAVSLSTCSGLRGLIVFENESYVLEPMKSATNRYKLFPAKKLKSVRGSCGSHHNTPNLAAKNVFPPPSQTWARRHKRETLKATKYVELVIVADNREFQRQGKDLEKVKQRLIEIANHVDKFYRPLNIRIVLVGVEVWNDMDKCSVSQDPFTSLHEFLDWRKMKLLPRKSHDNAQLVSGVYFQGTTIGMAPIMSMCTADQSGGIVMDHSDNPLGAAVTLAHELGHNFGMNHDTLDRGCSCQMAVEKGGCIMNASTGYPFPMVFSSCSRKDLETSLEKGMGVCLFNLPEVRESFGGQKCGNRFVEEGEECDCGEPEECMNRCCNATTCTLKPDAVCAHGLCCEDCQLKPAGTACRDSSNSCDLPEFCTGASPHCPANVYLHDGHSCQDVDGYCYNGICQTHEQQCVTLWGPGAKPAPGICFERVNSAGDPYGNCGKVSKSSFAKCEMRDAKCGKIQCQGGASRPVIGTNAVSIETNIPLQQGGRILCRGTHVYLGDDMPDPGLVLAGTKCADGKICLNRQCQNISVFGVHECAMQCHGRGVCNNRKNCHCEAHWAPPFCDKFGFGGSTDSGPIRQADNQGLTIGILVTILCLLAAGFVVYLKRKTLIRLLFTNKKTTIEKLRCVRPSRPPRGFQPCQAHLGHLGKGLMRKPPDSYPPKDNPRRLLQCQNVDISRPLNGLNVPQPQSTQRVLPPLHRAPRAPSVPARPLPAKPALRQAQGTCKPNPPQKPLPADPLARTTRLTHALARTPGQWETGLRLAPLRPAPQYPHQVPRSTHTAYIK.

The signal sequence occupies residues 1-28; the sequence is MAARPLPVSPARALLLALAGALLAPCEA. A propeptide spanning residues 29 to 207 is cleaved from the precursor; that stretch reads RGVSLWNQGR…SQTWARRHKR (179 aa). N-linked (GlcNAc...) asparagine glycosylation is found at asparagine 111 and asparagine 149. The Cysteine switch motif lies at 177–184; it reads GSCGSHHN. Cysteine 179 and histidine 350 together coordinate Zn(2+). At 208-708 the chain is on the extracellular side; the sequence is ETLKATKYVE…GPIRQADNQG (501 aa). Residues 214 to 416 form the Peptidase M12B domain; that stretch reads KYVELVIVAD…GMGVCLFNLP (203 aa). Intrachain disulfides connect cysteine 325–cysteine 411, cysteine 367–cysteine 395, and cysteine 369–cysteine 378. Glutamate 351 is a catalytic residue. Zn(2+)-binding residues include histidine 354 and histidine 360. 2 N-linked (GlcNAc...) asparagine glycosylation sites follow: asparagine 381 and asparagine 452. The 87-residue stretch at 424–510 folds into the Disintegrin domain; sequence GQKCGNRFVE…HCPANVYLHD (87 aa). Cysteine 482 and cysteine 502 are oxidised to a cystine. Residue asparagine 651 is glycosylated (N-linked (GlcNAc...) asparagine). The region spanning 656-688 is the EGF-like domain; sequence GVHECAMQCHGRGVCNNRKNCHCEAHWAPPFCD. Intrachain disulfides connect cysteine 660-cysteine 670, cysteine 664-cysteine 676, and cysteine 678-cysteine 687. A helical membrane pass occupies residues 709 to 729; it reads LTIGILVTILCLLAAGFVVYL. At 730-909 the chain is on the cytoplasmic side; sequence KRKTLIRLLF…PRSTHTAYIK (180 aa). Residues 822-862 are disordered; the sequence is LHRAPRAPSVPARPLPAKPALRQAQGTCKPNPPQKPLPADP. Residues 828 to 834 carry the SH3-binding; class II motif; sequence APSVPAR. Positions 834–841 match the SH3-binding; class I motif; it reads RPLPAKPA. Residues 851–860 are compositionally biased toward pro residues; sequence PNPPQKPLPA. An SH3-binding; class I motif is present at residues 885–891; it reads RLAPLRP. At tyrosine 907 the chain carries Phosphotyrosine; by SRC.

Interacts with alpha-actinin-2 and with syndecans. Interacts with SH3PXD2A. Interacts with FST3. Interacts with RACK1; the interaction is required for PKC-dependent translocation of ADAM12 to the cell membrane. Zn(2+) is required as a cofactor. Post-translationally, the precursor is cleaved by a furin endopeptidase. As to expression, isoform 1 is expressed in placenta and skeletal, cardiac, and smooth muscle. Isoform 2 seems to be expressed only in placenta or in embryo and fetus. Both forms were expressed in some tumor cells lines. Not detected in brain, lung, liver, kidney or pancreas.

The protein localises to the cell membrane. The protein resides in the secreted. Involved in skeletal muscle regeneration, specifically at the onset of cell fusion. Also involved in macrophage-derived giant cells (MGC) and osteoclast formation from mononuclear precursors. The protein is Disintegrin and metalloproteinase domain-containing protein 12 (ADAM12) of Homo sapiens (Human).